The following is a 536-amino-acid chain: Caspase recruitment domain-containing protein 9 (536 aa).

A Phosphoserine modification is found at Ser2. Positions 3, 10, and 73 each coordinate Zn(2+). Positions 6-98 (NDDECWSALE…QLYRKVTGKE (93 aa)) constitute a CARD domain. Positions 99-116 (PARVFSMIIDASGESGLT) are linker. 2 coiled-coil regions span residues 117 to 277 (QLLM…HRNS) and 303 to 420 (SLRK…QLDM). Residue Lys125 forms a Glycyl lysine isopeptide (Lys-Gly) (interchain with G-Cter in ubiquitin) linkage. Thr231 is modified (phosphothreonine). A Phosphoserine modification is found at Ser277. Phosphoserine occurs at positions 424, 425, 431, 451, 461, 483, and 498. The interval 425–451 (SDLEDSSPRNSQELSLPQDLEEDAQLS) is disordered. The segment at 472–536 (KHLSQTHDTV…GSDNTDTEGS (65 aa)) is disordered. Residues 487 to 502 (PPEKERRRLKESFENY) are compositionally biased toward basic and acidic residues. Phosphothreonine; by CK2 is present on residues Thr531 and Thr533.

In terms of assembly, monomer. Homodimer; homodimerization is mediated by the CARD domain which forms an extensive interaction with the adjacent linker and coiled-coil regions; leads to an autoinhibited state. Homomultimer; polymerizes following activation, forming a nucleating helical template that seeds BCL10-filament formation via a CARD-CARD interaction. Interacts (via CARD domain) with BCL10 (via CARD domain); interaction takes place following CARD9 activation and polymerization, leading to the formation of a filamentous CBM complex assembly. Component of a CBM complex (CARD9-BCL10, MALT1), composed of CARD9, BCL10 and MALT1. Interacts with RASGRF1. Interacts with NOD2 (via NACHT domain); interaction is direct. Interacts with RIPK2. Interacts with VHL; without leading to protein degradation. Post-translationally, phosphorylated at Thr-231 by PRKCD downstream of C-type lectin receptors activation: phosphorylation promotes interaction with BCL10, followed by activation of NF-kappa-B and MAP kinase p38 pathways. Phosphorylated at Thr-531 and Thr-533 by CK2 following interaction with VHL, leading to inhibit the ability to activate NF-kappa-B. Ubiquitinated at Lys-125 via 'Lys-27'-linked ubiquitin by TRIM62 downstream of C-type lectin receptors activation; leading to CARD9 activation, followed by activation of NF-kappa-B and MAP kinase p38 pathways. Deubiquitinated at Lys-125 by USP15, inhibiting CARD9.

The protein localises to the cytoplasm. With respect to regulation, maintained in an autoinhibited state via homodimerization in which the CARD domain forms an extensive interaction with the adjacent linker and coiled-coil regions. Activation downstream of C-type lectin receptors, by phosphorylation by PRKCD and/or ubiquitination by TRIM62, triggers disruption of the CARD domain-coiled coil interface, CARD9 homooligomerization and BCL10 recruitment, followed by activation of NF-kappa-B and MAP kinase p38 pathways. Zinc-binding inhibits activation by stabilizing the CARD ground-state conformation and restricting its capacity to form BCL10-nucleating filaments. Functionally, adapter protein that plays a key role in innate immune response against fungi by forming signaling complexes downstream of C-type lectin receptors. CARD9-mediated signals are essential for antifungal immunity against a subset of fungi from the phylum Ascomycota. Transduces signals in myeloid cells downstream of C-type lectin receptors CLEC7A (dectin-1), CLEC6A (dectin-2) and CLEC4E (Mincle), which detect pathogen-associated molecular pattern metabolites (PAMPs), such as fungal carbohydrates, and trigger CARD9 activation. Upon activation, CARD9 homooligomerizes to form a nucleating helical template that recruits BCL10 via CARD-CARD interaction, thereby promoting polymerization of BCL10 and subsequent recruitment of MALT1: this leads to activation of NF-kappa-B and MAP kinase p38 (MAPK11, MAPK12, MAPK13 and/or MAPK14) pathways which stimulate expression of genes encoding pro-inflammatory cytokines and chemokines. CARD9 signaling in antigen-presenting cells links innate sensing of fungi to the activation of adaptive immunity and provides a cytokine milieu that induces the development and subsequent of interleukin 17-producing T helper (Th17) cells. Also involved in activation of myeloid cells via classical ITAM-associated receptors and TLR: required for TLR-mediated activation of MAPK, while it is not required for TLR-induced activation of NF-kappa-B. CARD9 can also be engaged independently of BCL10: forms a complex with RASGRF1 downstream of C-type lectin receptors, which recruits and activates HRAS, leading to ERK activation and the production of cytokines. Acts as an important regulator of the intestinal commensal fungi (mycobiota) component of the gut microbiota. Plays an essential role in antifungal immunity against dissemination of gut fungi: acts by promoting induction of antifungal IgG antibodies response in CX3CR1(+) macrophages to confer protection against disseminated C.albicans or C.auris infection. Also mediates immunity against other pathogens, such as certain bacteria, viruses and parasites; CARD9 signaling is however redundant with other innate immune responses. In response to L.monocytogenes infection, required for the production of inflammatory cytokines activated by intracellular peptidoglycan: acts by connecting NOD2 recognition of peptidoglycan to downstream activation of MAP kinases (MAPK) without activating NF-kappa-B. The chain is Caspase recruitment domain-containing protein 9 from Rattus norvegicus (Rat).